Consider the following 194-residue polypeptide: dTTP/UTP pyrophosphatase (194 aa).

Catalysis depends on aspartate 73, which acts as the Proton acceptor.

This sequence belongs to the Maf family. YhdE subfamily. The cofactor is a divalent metal cation.

The protein resides in the cytoplasm. The catalysed reaction is dTTP + H2O = dTMP + diphosphate + H(+). It carries out the reaction UTP + H2O = UMP + diphosphate + H(+). Nucleoside triphosphate pyrophosphatase that hydrolyzes dTTP and UTP. May have a dual role in cell division arrest and in preventing the incorporation of modified nucleotides into cellular nucleic acids. This is dTTP/UTP pyrophosphatase from Clostridium botulinum (strain ATCC 19397 / Type A).